A 514-amino-acid polypeptide reads, in one-letter code: MQQLNPSEISEIIKQRIEKSNVAAQARNEGTVVSVSDGIVRIYGLADVMYGEMIEFPGGIFGMALNLEQDSVGAVVLGNYLGLTEGMSAKCTGRILEVPVGPELLGRVVDALGNPIDGKGPINAQATDAVEKVAPGVIWRKSVDQPVQTGYKSVDAMIPVGRGQRELIIGDRQIGKTALAIDAIINQKNSGIRCVYVAIGQKQSTIANVVRKLEEHGALQNTIVVAASASESAALQYLAPYAGCTMGEYFRDRGEDALIVYDDLSKQAVAYRQISLLLRRPPGREAYPGDVFYLHSRLLERASRVSEEYVEKFTNGAVTGKTGSLTALPIIETQAGDVSAFVPTNVISITDGQIFLESAMFNAGIRPAVNAGISVSRVGGAAQTKIVKKLSGGIRTALAQYRELAAFAQFASDLDEATRKQLEHGQRVTELMKQKQYAPMSIADMSLSLYAAERGYLADVEVAKVGAFEQALIAFFNREFADLMARINVKGDFNDEIDAGLKAGIEKFKATQSW.

170–177 (GDRQIGKT) is an ATP binding site.

Belongs to the ATPase alpha/beta chains family. In terms of assembly, F-type ATPases have 2 components, CF(1) - the catalytic core - and CF(0) - the membrane proton channel. CF(1) has five subunits: alpha(3), beta(3), gamma(1), delta(1), epsilon(1). CF(0) has three main subunits: a(1), b(2) and c(9-12). The alpha and beta chains form an alternating ring which encloses part of the gamma chain. CF(1) is attached to CF(0) by a central stalk formed by the gamma and epsilon chains, while a peripheral stalk is formed by the delta and b chains.

Its subcellular location is the cell inner membrane. It catalyses the reaction ATP + H2O + 4 H(+)(in) = ADP + phosphate + 5 H(+)(out). Its function is as follows. Produces ATP from ADP in the presence of a proton gradient across the membrane. The alpha chain is a regulatory subunit. The protein is ATP synthase subunit alpha of Stutzerimonas stutzeri (strain A1501) (Pseudomonas stutzeri).